The sequence spans 425 residues: F-box/LRR-repeat protein At3g59250 (425 aa).

The F-box domain maps to 6-54 (KDKISNLPEALICHILSFLPIEDSALTSVLSKRWRYLFAFRPNLVFDDS). LRR repeat units follow at residues 86–113 (DLQVNVNGVRLPSKVFVSKSLVRLRIES), 138–163 (MLGKGEDCFEKLTSGCHVLEELVLNN), 185–210 (CTESYDKNPHSVLFDTPNLVYLKYSD), 264–293 (CLSANSLAVLTFCCESIPVFNNLIQLTIKT), and 294–319 (NQSVGWESLPALLKNCPILETLVFEG).

The protein is F-box/LRR-repeat protein At3g59250 of Arabidopsis thaliana (Mouse-ear cress).